Here is a 225-residue protein sequence, read N- to C-terminus: MKADAKQITHLLKPLRLLLLGAPGSGKGTQTSRLLKQIPQLSSISSGDILRQEIKSESTLGREATTYIAQGKLLPDDLITRLITFRLSALGWLKPSAMWLLDGFPRTTAQASALDELLKQHDASLNLVVELDVPESTILERIENRYVHVPSGRVYNLQYNPPKVPGLDDITGEPLTKRLDDTAEVFKKRLEEYKKTNEPLKDYYKKSGIFGTVSGETSDIIFRNY.

24 to 29 (GSGKGT) is a binding site for GTP. Residues 45–74 (SSGDILRQEIKSESTLGREATTYIAQGKLL) are NMP. Residues Ser46, Arg51, 72 to 74 (KLL), 103 to 106 (GFPR), and Gln110 each bind AMP. Residues 144–181 (NRYVHVPSGRVYNLQYNPPKVPGLDDITGEPLTKRLDD) are LID. Residues Arg145 and 154–155 (VY) contribute to the GTP site. Positions 178 and 189 each coordinate AMP. Position 218 (Ser218) interacts with GTP.

It belongs to the adenylate kinase family. AK3 subfamily. Monomer.

Its subcellular location is the mitochondrion matrix. The catalysed reaction is a ribonucleoside 5'-triphosphate + AMP = a ribonucleoside 5'-diphosphate + ADP. Functionally, involved in maintaining the homeostasis of cellular nucleotides by catalyzing the interconversion of nucleoside phosphates. Has GTP:AMP phosphotransferase and ITP:AMP phosphotransferase activities. Does not accept ATP as phosphate donor. The protein is GTP:AMP phosphotransferase, mitochondrial of Saccharomyces cerevisiae (strain ATCC 204508 / S288c) (Baker's yeast).